The sequence spans 180 residues: CD-NTase/cGAS isopeptidase (180 aa).

The region spanning 33–165 is the MPN domain; it reads IVISSSTIEQ…AGSYSLSASV (133 aa). Glutamate 54 (proton donor/acceptor) is an active-site residue. Zn(2+) contacts are provided by histidine 115, histidine 117, and aspartate 128.

The protein belongs to the peptidase M67B family. Cap3 isopeptidase subfamily.

Its function is as follows. Metalloprotease priming reversal component of a CBASS antivirus system. CBASS (cyclic oligonucleotide-based antiphage signaling system) provides immunity against bacteriophages. The CD-NTase protein (CdnD) synthesizes cyclic nucleotides in response to infection; these serve as specific second messenger signals. The signals activate a diverse range of effectors, leading to bacterial cell death and thus abortive phage infection. A type II-C(AAG) CBASS system. In terms of biological role, reverses the primed state of DncV, the CD-NTase. Cleaves a CdnD-GFP (green fluorescent protein) fusion protein precisely at the C-terminus of CdnD. Overexpression decreases the efficacy of CBASS protection against phage T2. Antagonism of phage defense upon overexpression is CBASS-system specific, Cap3 from this bacteria only antagonizes its cognate CBASS system and not that of C.freundii, E.coli or V.cholerae. Functionally, protects E.coli against phage T2 infection. When the cdnD-cap2-cap3-cap4 operon is introduced in E.coli there is a more than 10(3) decrease in the efficiency of T2 plaque formation. The operon does not protect against phage T5 and only about 10-fold against T7. This Enterobacter hormaechei subsp. hoffmannii (strain UCI 50) protein is CD-NTase/cGAS isopeptidase.